Consider the following 132-residue polypeptide: Small ribosomal subunit protein uS8 (132 aa).

Belongs to the universal ribosomal protein uS8 family. As to quaternary structure, part of the 30S ribosomal subunit. Contacts proteins S5 and S12.

One of the primary rRNA binding proteins, it binds directly to 16S rRNA central domain where it helps coordinate assembly of the platform of the 30S subunit. This is Small ribosomal subunit protein uS8 from Clostridium botulinum (strain Alaska E43 / Type E3).